The sequence spans 189 residues: Pyridoxal 5'-phosphate synthase subunit PdxT (189 aa).

50-52 (GES) is a binding site for L-glutamine. C80 functions as the Nucleophile in the catalytic mechanism. L-glutamine is bound by residues R107 and 134–135 (IR). Residues H169 and E171 each act as charge relay system in the active site.

This sequence belongs to the glutaminase PdxT/SNO family. As to quaternary structure, in the presence of PdxS, forms a dodecamer of heterodimers. Only shows activity in the heterodimer.

It carries out the reaction aldehydo-D-ribose 5-phosphate + D-glyceraldehyde 3-phosphate + L-glutamine = pyridoxal 5'-phosphate + L-glutamate + phosphate + 3 H2O + H(+). The catalysed reaction is L-glutamine + H2O = L-glutamate + NH4(+). Its pathway is cofactor biosynthesis; pyridoxal 5'-phosphate biosynthesis. In terms of biological role, catalyzes the hydrolysis of glutamine to glutamate and ammonia as part of the biosynthesis of pyridoxal 5'-phosphate. The resulting ammonia molecule is channeled to the active site of PdxS. This Picrophilus torridus (strain ATCC 700027 / DSM 9790 / JCM 10055 / NBRC 100828 / KAW 2/3) protein is Pyridoxal 5'-phosphate synthase subunit PdxT.